A 444-amino-acid chain; its full sequence is Aflatoxin biosynthesis regulatory protein (444 aa).

Residues 1 to 26 (MVDHISPRASPGPIRSSQTRRARKLR) form a disordered region. The zn(2)-C6 fungal-type DNA-binding region spans 29–56 (CTSCASSKVRCTKEKPACARCIERGLAC). The interval 64 to 167 (MGRNPRAPSP…QGLGGDLAGQ (104 aa)) is disordered. A compositionally biased stretch (basic residues) spans 106–116 (TQAHTHAHSHP). Positions 120 to 130 (PQSHPQSNQPP) are enriched in low complexity. Over residues 136-149 (PNGSSSVSAIFSHQ) the composition is skewed to polar residues.

It is found in the nucleus. It participates in mycotoxin biosynthesis; aflatoxin biosynthesis. Involved in the regulation of aflatoxin biosynthesis. May have a role in nitrate assimilation and sclerotial morphogenesis. This chain is Aflatoxin biosynthesis regulatory protein (aflR), found in Aspergillus parasiticus.